Reading from the N-terminus, the 432-residue chain is Alpha-2 adrenergic receptor (432 aa).

Topologically, residues 1 to 32 (MDPLNATGMDAFTAIHLNASWSADSGYSLAAI) are extracellular. N-linked (GlcNAc...) asparagine glycans are attached at residues asparagine 5 and asparagine 18. A helical transmembrane segment spans residues 33 to 57 (ASIAALVSFLILFTVVGNILVVIAV). Topologically, residues 58–69 (LTSRALKAPQNL) are cytoplasmic. A helical transmembrane segment spans residues 70-95 (FLVSLATADILVATLVMPFSLANELM). The Extracellular portion of the chain corresponds to 96–105 (GYWYFGKVWC). A disulfide bridge connects residues cysteine 105 and cysteine 183. The helical transmembrane segment at 106 to 128 (GIYLALDVLFCTSSIVHLCAISL) threads the bilayer. The Cytoplasmic portion of the chain corresponds to 129 to 149 (DRYWSVTQAVEYNLKRTPKRV). The chain crosses the membrane as a helical span at residues 150-172 (KCIIVIVWLISAFISSPPLLSID). Over 173–188 (SNNYISSQPQCMLNDD) the chain is Extracellular. A helical transmembrane segment spans residues 189 to 212 (TWYILSSSMASFFAPCLIMILVYI). Topologically, residues 213 to 356 (RIYQVAKTRT…QAREKRFTFV (144 aa)) are cytoplasmic. Positions 222-319 (TRSMSGKEPR…SISKQSARIS (98 aa)) are disordered. 2 stretches are compositionally biased toward polar residues: residues 235 to 246 (VTQTENGLNKAN) and 265 to 275 (SQRTVTIGQQT). Residues 288–300 (GKGHKPQRQDSQR) show a composition bias toward basic and acidic residues. Over residues 309–319 (SSISKQSARIS) the composition is skewed to polar residues. A helical membrane pass occupies residues 357-380 (LAVVMGVFVVCWFPFFFSYSLHAV). Residues 381–393 (CRDYCKIPDTLFK) lie on the Extracellular side of the membrane. The helical transmembrane segment at 394–413 (FFWIGYCNSSLNPAIYTIFN) threads the bilayer. Topologically, residues 414 to 432 (RDFRRAFQKILCKSWKKSF) are cytoplasmic.

It belongs to the G-protein coupled receptor 1 family.

It localises to the cell membrane. Its function is as follows. Alpha-2 adrenergic receptors mediate the catecholamine-induced inhibition of adenylate cyclase through the action of G proteins. This Labrus ossifagus (Cuckoo wrasse) protein is Alpha-2 adrenergic receptor.